A 201-amino-acid chain; its full sequence is Small ribosomal subunit protein uS4B (201 aa).

Positions 93 to 156 constitute an S4 RNA-binding domain; it reads QRLDTVVYRL…RSLAVVRESL (64 aa).

This sequence belongs to the universal ribosomal protein uS4 family. Part of the 30S ribosomal subunit. Contacts protein S5. The interaction surface between S4 and S5 is involved in control of translational fidelity.

Functionally, one of the primary rRNA binding proteins, it binds directly to 16S rRNA where it nucleates assembly of the body of the 30S subunit. With S5 and S12 plays an important role in translational accuracy. In Symbiobacterium thermophilum (strain DSM 24528 / JCM 14929 / IAM 14863 / T), this protein is Small ribosomal subunit protein uS4B.